The sequence spans 274 residues: Large ribosomal subunit protein uL2 (274 aa).

The segment at 223–274 is disordered; the sequence is VAMNPVDHPHGGGEGRTSGGRHPVTPWGVPTKGYKTRSNKRTDKYIVRRRNK.

Belongs to the universal ribosomal protein uL2 family. Part of the 50S ribosomal subunit. Forms a bridge to the 30S subunit in the 70S ribosome.

Functionally, one of the primary rRNA binding proteins. Required for association of the 30S and 50S subunits to form the 70S ribosome, for tRNA binding and peptide bond formation. It has been suggested to have peptidyltransferase activity; this is somewhat controversial. Makes several contacts with the 16S rRNA in the 70S ribosome. This is Large ribosomal subunit protein uL2 from Shewanella oneidensis (strain ATCC 700550 / JCM 31522 / CIP 106686 / LMG 19005 / NCIMB 14063 / MR-1).